The primary structure comprises 324 residues: Fibronectin type III domain-containing protein 8 (324 aa).

In terms of domain architecture, Fibronectin type-III spans 179-280; the sequence is PDTPFIFEHT…KPYKFATLAT (102 aa).

The polypeptide is Fibronectin type III domain-containing protein 8 (FNDC8) (Homo sapiens (Human)).